The chain runs to 266 residues: Putative deoxyribonuclease tatdn3 (266 aa).

Residues His9, His11, Glu103, His143, His166, and Asp214 each coordinate Zn(2+).

This sequence belongs to the metallo-dependent hydrolases superfamily. TatD-type hydrolase family. It depends on Mn(2+) as a cofactor. Ca(2+) is required as a cofactor. Mg(2+) serves as cofactor. Requires Zn(2+) as cofactor.

The protein localises to the nucleus. The 3'-exonuclease activity is sensitive to the metal ion present in the active site, whereas the AP endodeoxyribonuclease activity is observed in a variety of divalent metal cofactors. 3'-exoxonuclease activity is suppressed in the presence of Ca(2+), Zn(2+) and Ni(2+). In terms of biological role, exhibits 3'-exonuclease activities and apurinic/apyrimidinic (AP) endonuclease (in vitro). Show preferential AP endonuclease activity on double-stranded DNA substrates and 3'- exonuclease activity on single-stranded DNA. The chain is Putative deoxyribonuclease tatdn3 (tatdn3) from Danio rerio (Zebrafish).